The chain runs to 492 residues: Cysteine--tRNA ligase (492 aa).

C35 lines the Zn(2+) pocket. The 'HIGH' region motif lies at 37–47 (PTVYSNVHLGN). Zn(2+)-binding residues include C230, H255, and E259. The 'KMSKS' region signature appears at 287–291 (KMAKS). Residue K290 participates in ATP binding.

Belongs to the class-I aminoacyl-tRNA synthetase family. In terms of assembly, monomer. Zn(2+) serves as cofactor.

It is found in the cytoplasm. It catalyses the reaction tRNA(Cys) + L-cysteine + ATP = L-cysteinyl-tRNA(Cys) + AMP + diphosphate. The sequence is that of Cysteine--tRNA ligase from Flavobacterium johnsoniae (strain ATCC 17061 / DSM 2064 / JCM 8514 / BCRC 14874 / CCUG 350202 / NBRC 14942 / NCIMB 11054 / UW101) (Cytophaga johnsonae).